The primary structure comprises 576 residues: Arginine--tRNA ligase (576 aa).

Positions Pro122 to His132 match the 'HIGH' region motif.

It belongs to the class-I aminoacyl-tRNA synthetase family. Monomer.

The protein resides in the cytoplasm. It catalyses the reaction tRNA(Arg) + L-arginine + ATP = L-arginyl-tRNA(Arg) + AMP + diphosphate. This Yersinia pseudotuberculosis serotype I (strain IP32953) protein is Arginine--tRNA ligase.